A 210-amino-acid chain; its full sequence is Ribosomal RNA large subunit methyltransferase E (210 aa).

S-adenosyl-L-methionine-binding residues include G60, W62, D80, D96, and D122. K162 serves as the catalytic Proton acceptor.

It belongs to the class I-like SAM-binding methyltransferase superfamily. RNA methyltransferase RlmE family.

It localises to the cytoplasm. It carries out the reaction uridine(2552) in 23S rRNA + S-adenosyl-L-methionine = 2'-O-methyluridine(2552) in 23S rRNA + S-adenosyl-L-homocysteine + H(+). Specifically methylates the uridine in position 2552 of 23S rRNA at the 2'-O position of the ribose in the fully assembled 50S ribosomal subunit. The polypeptide is Ribosomal RNA large subunit methyltransferase E (Dichelobacter nodosus (strain VCS1703A)).